A 589-amino-acid chain; its full sequence is EZH inhibitory protein (589 aa).

Disordered stretches follow at residues 1 to 46 (MASS…LRLR), 61 to 548 (AGED…SGPN), and 561 to 589 (LDSSSPRVPGEEIEAAPHTREEEDKKCRG). Composition is skewed to gly residues over residues 29 to 38 (GPRGRGGPSG) and 105 to 114 (PKGGGKADQG). Residues 147–161 (GAAGPPLPGARGSPA) show a composition bias toward low complexity. Residues 193–204 (LRSSTSQGSGST) show a composition bias toward polar residues. 4 stretches are compositionally biased toward low complexity: residues 299–308 (RSSASAVSPE), 325–334 (RSSASVVSPE), 351–360 (RSSASVVSPE), and 374–390 (PRATPRVPVAPSSTTRS). Position 306 is a phosphoserine (Ser306). A compositionally biased stretch (basic and acidic residues) spans 426–437 (MRLDLQVDREPE). Positions 438–449 (SEAEQEEQELES) are enriched in acidic residues. Positions 450 to 465 (EPGPSSRPQASRSSSR) are enriched in low complexity. Positions 482-490 (RRPVRMRAS) are sufficient for interaction with EZH2. Residues 484-503 (PVRMRASSPSPPGRLYPLPK) are necessary and sufficient for inhibition of PRC2/EED-EZH1 and PRC2/EED-EZH2 complex activity. Residues 509–547 (VHSPSSSSSESSSVSSSHSPLNKAPDPGSSPPLSSLSGP) are compositionally biased toward low complexity. The span at 575 to 589 (AAPHTREEEDKKCRG) shows a compositional bias: basic and acidic residues.

Interacts with PRC2/EED-EZH1 complex member EZH1 and with PRC2/EED-EZH2 complex member EZH2; the interaction blocks EZH1/EZH2 methyltransferase activity. Interacts (via C-terminus) with SUZ12 which is a member of the PRC2/EED-EZH1 and PRC2/EED-EZH2 complexes. In terms of tissue distribution, highly expressed in ovary with lower expression in testis and very low levels in other tissues tested including prostate, brain, kidney, spleen and liver. During spermatogenesis, expressed mainly in spermatogonia with very low expression in spermatocytes I and II.

It localises to the nucleus. The protein resides in the cytoplasm. Inhibits PRC2/EED-EZH1 and PRC2/EED-EZH2 complex function by inhibiting EZH1/EZH2 methyltransferase activity, thereby causing down-regulation of histone H3 trimethylation at 'Lys-27' (H3K27me3). Probably inhibits methyltransferase activity by limiting the stimulatory effect of cofactors such as AEBP2 and JARID2. Inhibits H3K27me3 deposition during spermatogenesis and oogenesis. The protein is EZH inhibitory protein of Mus musculus (Mouse).